A 100-amino-acid chain; its full sequence is MHLTPREREKLLIVTAADLARRRQARGLKLNYPEAVAIITYEIIEGARDGRSVAELMSYGTTILQREQVMAGVAEMIPEVQVEATFPDGTKLVTVHHPIR.

Belongs to the urease gamma subunit family. In terms of assembly, heterotrimer of UreA (gamma), UreB (beta) and UreC (alpha) subunits. Three heterotrimers associate to form the active enzyme.

The protein resides in the cytoplasm. It catalyses the reaction urea + 2 H2O + H(+) = hydrogencarbonate + 2 NH4(+). Its pathway is nitrogen metabolism; urea degradation; CO(2) and NH(3) from urea (urease route): step 1/1. This chain is Urease subunit gamma, found in Opitutus terrae (strain DSM 11246 / JCM 15787 / PB90-1).